The sequence spans 783 residues: Metabotropic glutamate receptor-like protein J (783 aa).

The N-terminal stretch at 1–20 (MKILLYIAIILSFFSLITIS) is a signal peptide. The Extracellular portion of the chain corresponds to 21–383 (SECKIAVLLS…DYPNSLKYGV (363 aa)). A coiled-coil region spans residues 56–85 (DFSIYYENLEESMEEAEKAFQDALHKGANL). N-linked (GlcNAc...) asparagine glycosylation is found at asparagine 181, asparagine 196, asparagine 256, asparagine 282, and asparagine 315. The helical transmembrane segment at 384 to 404 (TIVSGVCIFICLVCMTLVVVF) threads the bilayer. The Cytoplasmic segment spans residues 405–415 (KKARVIKSSSP). A helical membrane pass occupies residues 416–436 (AFLLLILLGCCIIFAACILFA). The Extracellular portion of the chain corresponds to 437 to 443 (QSPTNQT). N-linked (GlcNAc...) asparagine glycosylation occurs at asparagine 441. The helical transmembrane segment at 444–464 (CSARIWLLSLGYTLFLGNLLV) threads the bilayer. The Cytoplasmic segment spans residues 465–489 (KNWRIWLLFDNPKLKKRAITNWKLY). Residues 490-510 (PWVFAILAIDVMILAIWQGLG) form a helical membrane-spanning segment. Topologically, residues 511–538 (NINAESRIGYDSLTQYQYKNVCSSDDQG) are extracellular. A helical membrane pass occupies residues 539–559 (SIALYLLLVFHGLVLLVACFI). At 560-575 (SFKIKVVDIEEFNESK) the chain is on the cytoplasmic side. Residues 576 to 596 (PITTSVYIITFCLFIVIPLMV) traverse the membrane as a helical segment. The Extracellular segment spans residues 597–604 (SPQSLTSQ). The helical transmembrane segment at 605–625 (TTIICVCAIVTTLISMLLLFG) threads the bilayer. Over 626-783 (SKFYKMATQG…GETEIDSNNV (158 aa)) the chain is Cytoplasmic. Residues 647 to 656 (KSSSKSSKSS) are compositionally biased toward low complexity. 2 disordered regions span residues 647-696 (KSSS…FSNK) and 731-783 (QLQQ…SNNV). Over residues 670–679 (GEDDTSDETS) the composition is skewed to acidic residues. Over residues 763–783 (VLSKRISNQQNGETEIDSNNV) the composition is skewed to polar residues.

In the N-terminal section; belongs to the BMP lipoprotein family. This sequence in the C-terminal section; belongs to the G-protein coupled receptor 3 family. GABA-B receptor subfamily.

Its subcellular location is the cell membrane. It is found in the membrane. The protein resides in the endoplasmic reticulum membrane. The protein localises to the golgi apparatus membrane. It localises to the nucleus envelope. Functionally, may act during the development and be a negative regulator. The chain is Metabotropic glutamate receptor-like protein J (grlJ) from Dictyostelium discoideum (Social amoeba).